A 151-amino-acid polypeptide reads, in one-letter code: ALK and LTK ligand 2 (151 aa).

A signal peptide spans 1-25 (MRVSGRPMLLALLLLLSTVGDRGRA). 2 disulfides stabilise this stretch: C112–C148 and C126–C135.

This sequence belongs to the ALKAL family. As to quaternary structure, homodimer.

It localises to the secreted. Its subcellular location is the cell membrane. In terms of biological role, cytokine that acts as a physiological ligand for receptor tyrosine kinases LTK and ALK, leading to their activation. Cytokine-binding is sufficient to activate LTK. In contrast, ALKAL2-driven activation of ALK is coupled with heparin-binding to ALK. Stimulation of ALK signaling is involved in neural development and regulation of energy expenditure. The protein is ALK and LTK ligand 2 of Mus musculus (Mouse).